The following is a 96-amino-acid chain: U-scoloptoxin(06)-Sm1a (96 aa).

Positions 1–23 (MNSFSFFLVIFVVLNLQVAKLMA) are cleaved as a signal peptide.

The protein belongs to the scoloptoxin-06 family. In terms of processing, contains 2 disulfide bonds. As to expression, expressed by the venom gland.

It localises to the secreted. In Scolopendra morsitans (Tanzanian blue ringleg centipede), this protein is U-scoloptoxin(06)-Sm1a.